The chain runs to 323 residues: Probable cell division protein WhiA (323 aa).

A DNA-binding region (H-T-H motif) is located at residues 275–309 (TLKELGEMLTTGQVSKSGINHRLRKLDQIAERLRS).

Belongs to the WhiA family.

In terms of biological role, involved in cell division and chromosome segregation. The polypeptide is Probable cell division protein WhiA (Listeria monocytogenes serotype 4a (strain HCC23)).